Here is a 478-residue protein sequence, read N- to C-terminus: Sedoheptulokinase (478 aa).

The protein belongs to the FGGY kinase family. In terms of tissue distribution, strongly expressed in liver, kidney and pancreas. Expressed at lower levels in placenta and heart. Very weakly expressed in lung and brain.

The protein resides in the cytoplasm. The enzyme catalyses sedoheptulose + ATP = D-sedoheptulose 7-phosphate + ADP + H(+). In terms of biological role, acts as a modulator of macrophage activation through control of glucose metabolism. In Homo sapiens (Human), this protein is Sedoheptulokinase.